Here is a 100-residue protein sequence, read N- to C-terminus: RING finger protein Z (100 aa).

A lipid anchor (N-myristoyl glycine; by host) is attached at Gly-2. An RING-type; atypical zinc finger spans residues 43-79 (CRCCWFANTNLIKCSDHYICLKCLNIMLGKSSFCDIC). The PTAP/PSAP motif signature appears at 93-96 (PSAP).

Belongs to the arenaviridae Z protein family. In terms of assembly, interacts with protein NP; this interaction probably directs the encapsidated genome to budding sites. Interacts (via RING domain) with polymerase L; this interaction inhibits viral transcription and replication, Z partially blocks the product exit tunnel for the releasing nascent RNA product. Interacts with the glycoprotein complex; this interaction plays a role in virion budding. Interacts with host eIF4E; this interaction results in eIF4E reduced affinity for its substrate, the 5'-m7 G cap structure. Interacts (via late-budding domain) with host TSG101; this interaction is essential for budding and release of viral particles. Interacts with host RPLP0; this interaction may serve to load ribosome-like particles inside the virion. Interacts with host PML; this interaction induces PML bodies redistribution in the cytoplasm upon viral infection. Post-translationally, myristoylation is required for the role of RING finger protein Z in assembly and budding.

Its subcellular location is the virion. It localises to the host cytoplasm. The protein resides in the host perinuclear region. The protein localises to the host cell membrane. Its function is as follows. Plays a crucial role in virion assembly and budding. Expressed late in the virus life cycle, it acts as an inhibitor of viral transcription and RNA synthesis by interacting with the viral polymerase L. Presumably recruits the NP encapsidated genome to cellular membranes at budding sites via direct interaction with NP. Plays critical roles in the final steps of viral release by interacting with host TSG101, a member of the vacuolar protein-sorting pathway and using other cellular host proteins involved in vesicle formation pathway. The budding of the virus progeny occurs after association of protein Z with the viral glycoprotein complex SSP-GP1-GP2 at the cell periphery, step that requires myristoylation of protein Z. Also selectively represses protein production by associating with host eIF4E. In cell-based minigenome assay, has an inhibitory effect on the ribonucleoprotein machinery (vRNP), which is responsible for the replication and transcription of the viral genome. This chain is RING finger protein Z, found in Homo sapiens (Human).